Reading from the N-terminus, the 143-residue chain is 3-hydroxyacyl-[acyl-carrier-protein] dehydratase FabZ (143 aa).

Histidine 47 is a catalytic residue.

The protein belongs to the thioester dehydratase family. FabZ subfamily.

It is found in the cytoplasm. It carries out the reaction a (3R)-hydroxyacyl-[ACP] = a (2E)-enoyl-[ACP] + H2O. Its function is as follows. Involved in unsaturated fatty acids biosynthesis. Catalyzes the dehydration of short chain beta-hydroxyacyl-ACPs and long chain saturated and unsaturated beta-hydroxyacyl-ACPs. The sequence is that of 3-hydroxyacyl-[acyl-carrier-protein] dehydratase FabZ from Rickettsia canadensis (strain McKiel).